A 186-amino-acid chain; its full sequence is NADH-dependent FMN reductase SfnF (186 aa).

This sequence belongs to the SsuE family.

The enzyme catalyses FMNH2 + NAD(+) = FMN + NADH + 2 H(+). Involved in the dimethyl sulfide degradation pathway. Catalyzes the NADH-dependent reduction of FMN. The polypeptide is NADH-dependent FMN reductase SfnF (Pseudomonas putida (Arthrobacter siderocapsulatus)).